The primary structure comprises 78 residues: Acyl carrier protein (78 aa).

Positions 2–77 (DELFLRMRAL…DAYEFIKSKV (76 aa)) constitute a Carrier domain. Serine 37 is subject to O-(pantetheine 4'-phosphoryl)serine.

This sequence belongs to the acyl carrier protein (ACP) family. 4'-phosphopantetheine is transferred from CoA to a specific serine of apo-ACP by AcpS. This modification is essential for activity because fatty acids are bound in thioester linkage to the sulfhydryl of the prosthetic group.

The protein resides in the cytoplasm. The protein operates within lipid metabolism; fatty acid biosynthesis. Carrier of the growing fatty acid chain in fatty acid biosynthesis. In Treponema pallidum (strain Nichols), this protein is Acyl carrier protein.